Consider the following 970-residue polypeptide: Testis anion transporter 1 (970 aa).

At 1 to 95 the chain is on the cytoplasmic side; that stretch reads MAQLERSAIS…YRLKDWLLGD (95 aa). The chain crosses the membrane as a helical span at residues 96–116; the sequence is LLAGISVGLVQVPQGLTLSLL. The Extracellular portion of the chain corresponds to 117-119; sequence ARQ. The chain crosses the membrane as a helical span at residues 120-140; it reads LIPPLNIAYAAFCSSVIYVIF. At 141 to 146 the chain is on the cytoplasmic side; the sequence is GSCHQM. The chain crosses the membrane as a helical span at residues 147-167; sequence SIGSFFLVSALLINVLKVSPF. Residues 168–202 are Extracellular-facing; that stretch reads NNGQLVMGSFVKNEFSAPSYLMGYNKSLSVVATTT. Asn192 carries N-linked (GlcNAc...) asparagine glycosylation. The chain crosses the membrane as a helical span at residues 203–223; that stretch reads FLTGIIQLIMGVLGLGFIATY. The Cytoplasmic segment spans residues 224-232; it reads LPESAMSAY. Residues 233 to 253 form a helical membrane-spanning segment; the sequence is LAAVALHIMLSQLTFIFGIMI. Topologically, residues 254–270 are extracellular; sequence SFHAGPISFFYDIINYC. A helical transmembrane segment spans residues 271–291; that stretch reads VALPKANSTSILVFLTVVVAL. Over 292–307 the chain is Cytoplasmic; sequence RINKCIRISFNQYPIE. The chain crosses the membrane as a helical span at residues 308–328; the sequence is FPMELFLIIGFTVIANKISMA. The Extracellular portion of the chain corresponds to 329–355; it reads TETSQTLIDMIPYSFLLPVTPDFSLLP. Residues 356–376 form a helical membrane-spanning segment; the sequence is KIILQAFSLSLVSSFLLIFLG. Over 377–392 the chain is Cytoplasmic; sequence KKIASLHNYSVNSNQD. The chain crosses the membrane as a helical span at residues 393 to 413; it reads LIAIGLCNVVSSFFRSCVFTG. Residues 414–429 lie on the Extracellular side of the membrane; the sequence is AIARTIIQDKSGGRQQ. The helical transmembrane segment at 430 to 450 threads the bilayer; sequence FASLVGAGVMLLLMVKMGHFF. The Cytoplasmic segment spans residues 451 to 452; that stretch reads YT. A helical transmembrane segment spans residues 453 to 473; that stretch reads LPNAVLAGIILSNVIPYLETI. At 474-497 the chain is on the extracellular side; it reads SNLPSLWRQDQYDCALWMMTFSSS. Residues 498 to 518 traverse the membrane as a helical segment; the sequence is IFLGLDIGLIISVVSAFFITT. At 519–970 the chain is on the cytoplasmic side; it reads VRSHRAKILL…SPEGNSNEDV (452 aa). Positions 543–795 constitute an STAS domain; it reads DYREIITIPG…LSVHDAVLFA (253 aa). Residues 664 to 970 are interaction with RACGAP1; the sequence is TVSSVSQKNQ…SPEGNSNEDV (307 aa). Positions 858 to 868 are enriched in acidic residues; it reads SELDLELESEQ. The interval 858-970 is disordered; it reads SELDLELESE…SPEGNSNEDV (113 aa). Over residues 877 to 898 the composition is skewed to basic and acidic residues; that stretch reads DLDRELEPEMEPKAETETKTQT. A compositionally biased stretch (low complexity) spans 938–948; sequence STQSQTQTRTW.

Belongs to the SLC26A/SulP transporter (TC 2.A.53) family. As to quaternary structure, interacts with RACGAP1. Interacts with CFTR; stimulates anion transport activity of CFTR. N-glycosylated. As to expression, expression observed exclusively in testis, restricted to the meiotic phase of the germ cell. Abundant expression located in the seminiferous tubules, concentrated on the luminal side of the tubuli harboring the spermatocytes and spermatids.

It is found in the membrane. It carries out the reaction sulfate(out) + chloride(in) = sulfate(in) + chloride(out). The catalysed reaction is oxalate(in) + chloride(out) = oxalate(out) + chloride(in). Activity is inhibited by 4,4'-Di-isothiocyanatostilbene-2,2'-disulfonic acid (DIDS - an inhibitor of several anion channels and transporters) and gluconate. Antiporter that mediates the exchange of sulfate and oxalate against chloride ions across a membrane. Stimulates anion transport activity of CFTR. May cooperate with CFTR in the regulation of chloride and bicarbonate ions fluxes required for activation of the ADCY10/PKA pathway during sperm motility and sperm capacitation. May play a role in sperm tail differentiation and motility and hence male fertility. The polypeptide is Testis anion transporter 1 (Homo sapiens (Human)).